Here is a 328-residue protein sequence, read N- to C-terminus: D-cysteine desulfhydrase (328 aa).

Lys51 is modified (N6-(pyridoxal phosphate)lysine).

Belongs to the ACC deaminase/D-cysteine desulfhydrase family. As to quaternary structure, homodimer. Requires pyridoxal 5'-phosphate as cofactor.

It catalyses the reaction D-cysteine + H2O = hydrogen sulfide + pyruvate + NH4(+) + H(+). Functionally, catalyzes the alpha,beta-elimination reaction of D-cysteine and of several D-cysteine derivatives. It could be a defense mechanism against D-cysteine. This is D-cysteine desulfhydrase from Salmonella paratyphi C (strain RKS4594).